Reading from the N-terminus, the 299-residue chain is MTNYIEHKPVMAKQVAELLVSNEEGIYVDATAGSGGHLGLLANTYPEASFIGIDIDPEAVKFLTEKFAGVSNVRIIRGNYADLPDILHSMEIGQVDGILLDLGISMHQALSAQRGFSIKNPGPLDMRFSIDQKVTAYELVNSLSEEQLADIIYRYGEERRARKIAKAVVEARKVKPLETTDELADLVARTVGYRGRIHPATRVFQALRIATNRELDNLQVALPRIFQVLKEGGRLAVISYHSLEDRIVKQFFKTWEEEGKGLRLTKKVVKPSLEEINENPSSRSAKLRVFKKGVGGNEN.

S-adenosyl-L-methionine-binding positions include 35-37, Asp54, Tyr80, Asp101, and Gln108; that span reads GGH.

This sequence belongs to the methyltransferase superfamily. RsmH family.

Its subcellular location is the cytoplasm. The catalysed reaction is cytidine(1402) in 16S rRNA + S-adenosyl-L-methionine = N(4)-methylcytidine(1402) in 16S rRNA + S-adenosyl-L-homocysteine + H(+). Its function is as follows. Specifically methylates the N4 position of cytidine in position 1402 (C1402) of 16S rRNA. This is Ribosomal RNA small subunit methyltransferase H from Coprothermobacter proteolyticus (strain ATCC 35245 / DSM 5265 / OCM 4 / BT).